The primary structure comprises 142 residues: Large ribosomal subunit protein uL16 (142 aa).

It belongs to the universal ribosomal protein uL16 family. In terms of assembly, part of the 50S ribosomal subunit.

Functionally, binds 23S rRNA and is also seen to make contacts with the A and possibly P site tRNAs. The polypeptide is Large ribosomal subunit protein uL16 (Phenylobacterium zucineum (strain HLK1)).